The chain runs to 245 residues: DNA polymerase sliding clamp (245 aa).

The protein belongs to the PCNA family. As to quaternary structure, homotrimer. The subunits circularize to form a toroid; DNA passes through its center. Replication factor C (RFC) is required to load the toroid on the DNA.

Functionally, sliding clamp subunit that acts as a moving platform for DNA processing. Responsible for tethering the catalytic subunit of DNA polymerase and other proteins to DNA during high-speed replication. In Methanosarcina mazei (strain ATCC BAA-159 / DSM 3647 / Goe1 / Go1 / JCM 11833 / OCM 88) (Methanosarcina frisia), this protein is DNA polymerase sliding clamp.